Reading from the N-terminus, the 1249-residue chain is Cilia- and flagella-associated protein 57 (1249 aa).

8 WD repeats span residues 105-148 (FQVQ…AIIK), 195-233 (GESS…WETS), 335-374 (SDKQ…ISKG), 386-425 (LHSA…LELY), 427-469 (EYQE…KEYS), 471-506 (RGCK…NINI), 509-548 (GHTG…RETE), and 635-674 (AHAG…GRGI). Coiled coils occupy residues 690–1056 (KTDM…KTDL) and 1094–1165 (SDLQ…SALK).

It belongs to the CFAP57 family. May form homodimers. Associates with components of the nexin-dynein regulatory complex (N-DRC) and the CFAP184:CFAP263 complex. As to expression, predominanly expressed in testis, lung and skin. Weak expression in brain and kidney.

It is found in the cytoplasm. The protein localises to the cytoskeleton. Its subcellular location is the cilium axoneme. Associates with components of the nexin-dynein regulatory complex (N-DRC), a key regulator of ciliary/flagellar motility, and might act as an inner dynein arm (IDA) hub or linkage. This is Cilia- and flagella-associated protein 57 from Mus musculus (Mouse).